The primary structure comprises 315 residues: MSKPLRIVFAGTPDFAAQHLAALLSSEHEVIAVYTQPDRPAGRGKKLTASPVKTIALEHNIPVYQPENFKSDEAKQALADLNADIMVVVAYGLLLPQAVLDTPKLGCINVHGSILPRWRGAAPIQRSIWAGDAETGVTIMQMDIGLDTGDMLKIATLPIDASDTSATMYDKLAKLGPVALVECLADIAAGTAIAIKQDDERANYAKKLSKEEARINWQDDAEHIERCVRAFNPWPMSHFEVAENSIKVWQSRVEASSHDAPAGTILKADKSGIYIATGHGCLVLEQIQIPGKKAMPVQDVLNARAAWFEVGSVLS.

(6S)-5,6,7,8-tetrahydrofolate is bound at residue 113–116 (SILP).

Belongs to the Fmt family.

It catalyses the reaction L-methionyl-tRNA(fMet) + (6R)-10-formyltetrahydrofolate = N-formyl-L-methionyl-tRNA(fMet) + (6S)-5,6,7,8-tetrahydrofolate + H(+). Its function is as follows. Attaches a formyl group to the free amino group of methionyl-tRNA(fMet). The formyl group appears to play a dual role in the initiator identity of N-formylmethionyl-tRNA by promoting its recognition by IF2 and preventing the misappropriation of this tRNA by the elongation apparatus. The protein is Methionyl-tRNA formyltransferase of Vibrio vulnificus (strain YJ016).